Consider the following 354-residue polypeptide: Serum paraoxonase/lactonase 3 (354 aa).

Cys42 and Cys352 are joined by a disulfide. Asn50 is a glycosylation site (N-linked (GlcNAc...) asparagine). Glu53 and Asp54 together coordinate Ca(2+). Residue His114 is the Proton acceptor of the active site. Residue Ile116 coordinates Ca(2+). Residue Ser165 is modified to Phosphoserine. 5 residues coordinate Ca(2+): Asn167, Asp168, Asn223, Asp268, and Asn269. N-linked (GlcNAc...) asparagine glycans are attached at residues Asn269 and Asn323.

This sequence belongs to the paraoxonase family. Homodimer. The cofactor is Ca(2+). In terms of processing, glycosylated. Post-translationally, the signal sequence is not cleaved.

It is found in the secreted. Its subcellular location is the extracellular space. It carries out the reaction a phenyl acetate + H2O = a phenol + acetate + H(+). The catalysed reaction is An aryl dialkyl phosphate + H2O = dialkyl phosphate + an aryl alcohol.. The enzyme catalyses an N-acyl-L-homoserine lactone + H2O = an N-acyl-L-homoserine + H(+). Functionally, has low activity towards the organophosphate paraxon and aromatic carboxylic acid esters. Rapidly hydrolyzes lactones such as statin prodrugs (e.g. lovastatin). Hydrolyzes aromatic lactones and 5- or 6-member ring lactones with aliphatic substituents but not simple lactones or those with polar substituents. The sequence is that of Serum paraoxonase/lactonase 3 (Pon3) from Mus musculus (Mouse).